The following is an 800-amino-acid chain: Receptor-like protein 47 (800 aa).

An N-terminal signal peptide occupies residues 1-31; sequence MMHSSSVRRMITVKWSLCLIFCLTNSILVSA. Over 32-759 the chain is Extracellular; that stretch reads KHLCLPDQKD…QDEDKEEEDQ (728 aa). 2 N-linked (GlcNAc...) asparagine glycosylation sites follow: asparagine 66 and asparagine 102. LRR repeat units lie at residues 109-131, 133-156, 157-179, 190-213, 214-238, 240-262, 263-288, 294-311, 312-334, 335-358, 360-383, 385-406, 407-430, 431-453, 455-477, 479-500, 502-523, 524-550, 551-574, 621-645, 646-669, 670-693, and 695-718; these read QHLQKLVLGSNHLSGILPDSIGN, KRLKVLVLVNCNLFGKIPSSLGNL, SYLTHLDLSYNDFTSEGPDSMGN, LSSVTWIDLGDNQLKGMLPSNMSS, LSKLEAFDISGNSFSGTIPSSLFMI, SLILLHLGRNDFSGPFEIGNISS, PSNLQLLNIGRNNFNPDIVDLSIFSP, YLDVSGINLKISSTVSLP, SPIEYLGLLSCNISEFPKFLRNQ, TSLEYLDISANQIEGQVPEWLWSL, ELRYVNISHNSFNGFEGPADVIQG, RELLVLDISSNIFQDPFPLLPV, VSMNYLFSSNNRFSGEIPKTICEL, DNLRILVLSNNNFSGSIPRCFEN, HLYVLHLRNNNLSGIFPEEAISH, LQSFDVGHNLFSGELPKSLINC, DIEFLNVEDNRINDTFPSWLEL, LPNLQILVLRSNEFYGPIFSPGDSLSF, SRLRIFDISENRFTGVLPSDYFVG, FTIYKTIDVSGNRLEGDIPESIGLL, KEVIVLSMSNNAFTGHIPPSLSNL, SNLQSLDLSQNRLSGSIPGELGKL, and FLEWMNFSHNRLEGPIPETTQIQT. Asparagine 155 carries N-linked (GlcNAc...) asparagine glycosylation. Asparagine 210 carries N-linked (GlcNAc...) asparagine glycosylation. An N-linked (GlcNAc...) asparagine glycan is attached at asparagine 259. N-linked (GlcNAc...) asparagine glycosylation is found at asparagine 323 and asparagine 333. The N-linked (GlcNAc...) asparagine glycan is linked to asparagine 365. N-linked (GlcNAc...) asparagine glycans are attached at residues asparagine 442, asparagine 465, asparagine 499, and asparagine 514. N-linked (GlcNAc...) asparagine glycosylation occurs at asparagine 668. N-linked (GlcNAc...) asparagine glycosylation occurs at asparagine 700. A helical transmembrane segment spans residues 760 to 780; sequence VFSWIAAAIGYVPGVVCGLTI. Topologically, residues 781-800 are cytoplasmic; sequence GHILVSHKRDWFMRIVSFFT.

It belongs to the RLP family.

It is found in the cell membrane. The sequence is that of Receptor-like protein 47 from Arabidopsis thaliana (Mouse-ear cress).